The sequence spans 163 residues: SsrA-binding protein (163 aa).

The protein belongs to the SmpB family.

The protein localises to the cytoplasm. Functionally, required for rescue of stalled ribosomes mediated by trans-translation. Binds to transfer-messenger RNA (tmRNA), required for stable association of tmRNA with ribosomes. tmRNA and SmpB together mimic tRNA shape, replacing the anticodon stem-loop with SmpB. tmRNA is encoded by the ssrA gene; the 2 termini fold to resemble tRNA(Ala) and it encodes a 'tag peptide', a short internal open reading frame. During trans-translation Ala-aminoacylated tmRNA acts like a tRNA, entering the A-site of stalled ribosomes, displacing the stalled mRNA. The ribosome then switches to translate the ORF on the tmRNA; the nascent peptide is terminated with the 'tag peptide' encoded by the tmRNA and targeted for degradation. The ribosome is freed to recommence translation, which seems to be the essential function of trans-translation. The chain is SsrA-binding protein from Buchnera aphidicola subsp. Schizaphis graminum (strain Sg).